Here is a 1081-residue protein sequence, read N- to C-terminus: Carbamoyl phosphate synthase large chain (1081 aa).

Positions 1–403 are carboxyphosphate synthetic domain; it reads MPRRNDLNKI…SFQKALRSLE (403 aa). ATP-binding residues include Arg129, Arg170, Gly177, Lys209, Leu211, Glu216, Gly242, Val243, His244, Gln286, and Glu300. The 197-residue stretch at 133-329 folds into the ATP-grasp 1 domain; that stretch reads KEAMARIGVP…IAKFAAKLAV (197 aa). Residues Gln286, Glu300, and Asn302 each contribute to the Mg(2+) site. The Mn(2+) site is built by Gln286, Glu300, and Asn302. Residues 404–553 are oligomerization domain; that stretch reads TGRFGFGCDR…STYEPEECEV (150 aa). Residues 554–944 form a carbamoyl phosphate synthetic domain region; that stretch reads LPSDKPKVMI…AFAKAELGAG (391 aa). The region spanning 686 to 878 is the ATP-grasp 2 domain; sequence EKILHELEIS…LAKIASLVMS (193 aa). Residues Arg722, Lys761, Leu763, Glu768, Gly794, Ile795, His796, Ser797, Gln837, and Glu849 each coordinate ATP. Residues Gln837, Glu849, and Asn851 each coordinate Mg(2+). Mn(2+)-binding residues include Gln837, Glu849, and Asn851. Residues 945 to 1081 form the MGS-like domain; it reads VILATTGTVF…DVKALQDYLG (137 aa). The interval 945 to 1081 is allosteric domain; that stretch reads VILATTGTVF…DVKALQDYLG (137 aa).

The protein belongs to the CarB family. Composed of two chains; the small (or glutamine) chain promotes the hydrolysis of glutamine to ammonia, which is used by the large (or ammonia) chain to synthesize carbamoyl phosphate. Tetramer of heterodimers (alpha,beta)4. It depends on Mg(2+) as a cofactor. The cofactor is Mn(2+).

It carries out the reaction hydrogencarbonate + L-glutamine + 2 ATP + H2O = carbamoyl phosphate + L-glutamate + 2 ADP + phosphate + 2 H(+). It catalyses the reaction hydrogencarbonate + NH4(+) + 2 ATP = carbamoyl phosphate + 2 ADP + phosphate + 2 H(+). It participates in amino-acid biosynthesis; L-arginine biosynthesis; carbamoyl phosphate from bicarbonate: step 1/1. The protein operates within pyrimidine metabolism; UMP biosynthesis via de novo pathway; (S)-dihydroorotate from bicarbonate: step 1/3. Large subunit of the glutamine-dependent carbamoyl phosphate synthetase (CPSase). CPSase catalyzes the formation of carbamoyl phosphate from the ammonia moiety of glutamine, carbonate, and phosphate donated by ATP, constituting the first step of 2 biosynthetic pathways, one leading to arginine and/or urea and the other to pyrimidine nucleotides. The large subunit (synthetase) binds the substrates ammonia (free or transferred from glutamine from the small subunit), hydrogencarbonate and ATP and carries out an ATP-coupled ligase reaction, activating hydrogencarbonate by forming carboxy phosphate which reacts with ammonia to form carbamoyl phosphate. The polypeptide is Carbamoyl phosphate synthase large chain (Synechocystis sp. (strain ATCC 27184 / PCC 6803 / Kazusa)).